The chain runs to 297 residues: Tyrosine recombinase XerD (297 aa).

Residues 1-86 (MNDLIEDFLH…SLRSFFHYLM (86 aa)) form the Core-binding (CB) domain. Positions 107 to 291 (GLPKVLNLDD…TKLRLKDVYK (185 aa)) constitute a Tyr recombinase domain. Catalysis depends on residues Arg147, Lys171, His243, Arg246, and His269. Tyr278 (O-(3'-phospho-DNA)-tyrosine intermediate) is an active-site residue.

It belongs to the 'phage' integrase family. XerD subfamily. In terms of assembly, forms a cyclic heterotetrameric complex composed of two molecules of XerC and two molecules of XerD.

Its subcellular location is the cytoplasm. Its function is as follows. Site-specific tyrosine recombinase, which acts by catalyzing the cutting and rejoining of the recombining DNA molecules. The XerC-XerD complex is essential to convert dimers of the bacterial chromosome into monomers to permit their segregation at cell division. It also contributes to the segregational stability of plasmids. This Listeria monocytogenes serotype 4b (strain F2365) protein is Tyrosine recombinase XerD.